Here is a 329-residue protein sequence, read N- to C-terminus: Fructose-1,6-bisphosphatase class 1 (329 aa).

Mg(2+)-binding residues include Glu84, Asp103, Leu105, and Asp106. Substrate contacts are provided by residues Asp106 to Ser109, Asn196, and Lys262. Glu268 contacts Mg(2+).

This sequence belongs to the FBPase class 1 family. Homotetramer. The cofactor is Mg(2+).

The protein resides in the cytoplasm. The enzyme catalyses beta-D-fructose 1,6-bisphosphate + H2O = beta-D-fructose 6-phosphate + phosphate. It participates in carbohydrate biosynthesis; gluconeogenesis. The sequence is that of Fructose-1,6-bisphosphatase class 1 from Shewanella sediminis (strain HAW-EB3).